Here is a 2617-residue protein sequence, read N- to C-terminus: Ubiquitin carboxyl-terminal hydrolase 24 (2617 aa).

One can recognise a UBA domain in the interval 3–44 (SEEEQHMTTLLCMGFSDPATIRKALRLAKNDINEAVALLTNE). Residues 45–99 (RPGLDYGGYEPMDSGGPSPGPGGGPRGDSGSDGSGPSRGGSTGGGGGFDPPPAYH) form a disordered region. Ser-62 and Ser-85 each carry phosphoserine. Positions 65-92 (PGGGPRGDSGSDGSGPSRGGSTGGGGGF) are enriched in gly residues. Residue Tyr-939 is modified to Phosphotyrosine. Disordered stretches follow at residues 1030–1056 (KTSG…SGAF) and 1127–1148 (LLSE…QQHQ). 2 stretches are compositionally biased toward low complexity: residues 1031 to 1056 (TSGS…SGAF) and 1128 to 1148 (LSET…QQHQ). A phosphoserine mark is found at Ser-1138 and Ser-1282. A USP domain is found at 1686-2039 (VGLRNGGATC…NAYMLFYQRV (354 aa)). The Nucleophile role is filled by Cys-1695. The interval 1920 to 1942 (QDSSSEVGENGRNMDQGGGGSPR) is disordered. Residue Ser-1940 is modified to Phosphoserine. His-1967 serves as the catalytic Proton acceptor. Phosphoserine occurs at positions 2044, 2074, and 2558. Residues 2060 to 2087 (AEDLSLSAPSSPEISPQSSPRPHRPNND) are disordered. Positions 2066 to 2079 (SAPSSPEISPQSSP) are enriched in low complexity. Position 2562 is a phosphothreonine (Thr-2562). The interval 2572-2617 (EKEQSGSSNGSESSPANENGERHLQQGSESPMMIGELRSDLDDVDP) is disordered. Residues 2576–2589 (SGSSNGSESSPANE) show a composition bias toward low complexity. Ser-2601 carries the post-translational modification Phosphoserine. The span at 2608–2617 (LRSDLDDVDP) shows a compositional bias: basic and acidic residues.

This sequence belongs to the peptidase C19 family.

It carries out the reaction Thiol-dependent hydrolysis of ester, thioester, amide, peptide and isopeptide bonds formed by the C-terminal Gly of ubiquitin (a 76-residue protein attached to proteins as an intracellular targeting signal).. Functionally, protease that can remove conjugated ubiquitin from target proteins and polyubiquitin chains. Deubiquitinates DDB2, preventing its proteasomal degradation. The polypeptide is Ubiquitin carboxyl-terminal hydrolase 24 (Usp24) (Mus musculus (Mouse)).